The following is a 300-amino-acid chain: Homoserine kinase (300 aa).

ATP is bound at residue 86–96; sequence PVARGLGSSAT.

It belongs to the GHMP kinase family. Homoserine kinase subfamily.

Its subcellular location is the cytoplasm. It catalyses the reaction L-homoserine + ATP = O-phospho-L-homoserine + ADP + H(+). Its pathway is amino-acid biosynthesis; L-threonine biosynthesis; L-threonine from L-aspartate: step 4/5. Its function is as follows. Catalyzes the ATP-dependent phosphorylation of L-homoserine to L-homoserine phosphate. The chain is Homoserine kinase from Persephonella marina (strain DSM 14350 / EX-H1).